The chain runs to 78 residues: Protein SlyX homolog (78 aa).

Belongs to the SlyX family.

In Xanthomonas campestris pv. campestris (strain 8004), this protein is Protein SlyX homolog.